A 647-amino-acid chain; its full sequence is 1-deoxy-D-xylulose-5-phosphate synthase (647 aa).

Thiamine diphosphate-binding positions include H72 and 113-115 (GHA). D144 serves as a coordination point for Mg(2+). Thiamine diphosphate is bound by residues 145 to 146 (GA), N174, Y287, and E370. N174 lines the Mg(2+) pocket.

The protein belongs to the transketolase family. DXPS subfamily. In terms of assembly, homodimer. Mg(2+) is required as a cofactor. Thiamine diphosphate serves as cofactor.

The enzyme catalyses D-glyceraldehyde 3-phosphate + pyruvate + H(+) = 1-deoxy-D-xylulose 5-phosphate + CO2. It functions in the pathway metabolic intermediate biosynthesis; 1-deoxy-D-xylulose 5-phosphate biosynthesis; 1-deoxy-D-xylulose 5-phosphate from D-glyceraldehyde 3-phosphate and pyruvate: step 1/1. Catalyzes the acyloin condensation reaction between C atoms 2 and 3 of pyruvate and glyceraldehyde 3-phosphate to yield 1-deoxy-D-xylulose-5-phosphate (DXP). This chain is 1-deoxy-D-xylulose-5-phosphate synthase, found in Synechococcus sp. (strain WH7803).